Consider the following 290-residue polypeptide: Bifunctional protein FolD (290 aa).

NADP(+) contacts are provided by residues 167–169, serine 192, and isoleucine 233; that span reads GRS.

It belongs to the tetrahydrofolate dehydrogenase/cyclohydrolase family. In terms of assembly, homodimer.

The enzyme catalyses (6R)-5,10-methylene-5,6,7,8-tetrahydrofolate + NADP(+) = (6R)-5,10-methenyltetrahydrofolate + NADPH. The catalysed reaction is (6R)-5,10-methenyltetrahydrofolate + H2O = (6R)-10-formyltetrahydrofolate + H(+). The protein operates within one-carbon metabolism; tetrahydrofolate interconversion. Catalyzes the oxidation of 5,10-methylenetetrahydrofolate to 5,10-methenyltetrahydrofolate and then the hydrolysis of 5,10-methenyltetrahydrofolate to 10-formyltetrahydrofolate. The sequence is that of Bifunctional protein FolD from Gloeobacter violaceus (strain ATCC 29082 / PCC 7421).